The following is a 482-amino-acid chain: uncharacterized protein (482 aa).

12 helical membrane passes run 40–57 (LDWY…LSFL), 83–103 (AAVS…VLLV), 109–129 (HYYL…TCFV), 140–160 (LLLG…ISMT), 170–190 (LAYL…IATG), 205–225 (WLYI…LFCL), 278–298 (VIQF…PSIL), 311–331 (YMSV…CLLS), 338–358 (GWFI…LLAT), 366–386 (VATY…ITWI), 399–418 (ALGC…GQVY), and 428–448 (GFAL…RFYL).

This sequence belongs to the major facilitator superfamily. Allantoate permease family.

The protein resides in the endoplasmic reticulum. The protein localises to the membrane. This is an uncharacterized protein from Schizosaccharomyces pombe (strain 972 / ATCC 24843) (Fission yeast).